The following is a 128-amino-acid chain: Large ribosomal subunit protein uL22 (128 aa).

This sequence belongs to the universal ribosomal protein uL22 family. In terms of assembly, part of the 50S ribosomal subunit.

This protein binds specifically to 23S rRNA; its binding is stimulated by other ribosomal proteins, e.g. L4, L17, and L20. It is important during the early stages of 50S assembly. It makes multiple contacts with different domains of the 23S rRNA in the assembled 50S subunit and ribosome. Functionally, the globular domain of the protein is located near the polypeptide exit tunnel on the outside of the subunit, while an extended beta-hairpin is found that lines the wall of the exit tunnel in the center of the 70S ribosome. In Nitrobacter hamburgensis (strain DSM 10229 / NCIMB 13809 / X14), this protein is Large ribosomal subunit protein uL22.